The sequence spans 376 residues: Multiphosphoryl transfer protein (376 aa).

The 141-residue stretch at 2-142 folds into the PTS EIIA type-2 domain; sequence FQLSVQDIHP…EELRALLMGE (141 aa). H62 (tele-phosphohistidine intermediate; for EIIA activity) is an active-site residue. The residue at position 62 (H62) is a Phosphohistidine; by HPr. The tract at residues 156–284 is m domain; it reads TLDIVASDLL…LTSDDAPTDD (129 aa). The HPr domain occupies 285 to 375; sequence VLSAEFVVRN…DAIAAGLGEG (91 aa). H299 functions as the Pros-phosphohistidine intermediate; for HPr activity in the catalytic mechanism. At H299 the chain carries Phosphohistidine; by EI.

The protein resides in the cytoplasm. The phosphoenolpyruvate-dependent sugar phosphotransferase system (sugar PTS), a major carbohydrate active transport system, catalyzes the phosphorylation of incoming sugar substrates concomitantly with their translocation across the cell membrane. The enzyme II FruAB PTS system is involved in fructose transport. This chain is Multiphosphoryl transfer protein, found in Escherichia coli O157:H7.